The primary structure comprises 171 residues: UPF0312 protein SAB2563 (171 aa).

The protein belongs to the UPF0312 family.

The polypeptide is UPF0312 protein SAB2563 (Staphylococcus aureus (strain bovine RF122 / ET3-1)).